A 1019-amino-acid polypeptide reads, in one-letter code: DNA topoisomerase 1 (1019 aa).

Positions 1–160 (MNSIQVKNEP…KTMSITGSGE (160 aa)) are disordered. Residues 46–56 (KPLAKRPKVED) are compositionally biased toward basic and acidic residues. The segment covering 62-78 (PLTSTVSSQNGVQKRSG) has biased composition (polar residues). Composition is skewed to acidic residues over residues 83 to 93 (DDNDDDSDSDS) and 107 to 136 (SDDD…DDDD). Interaction with DNA regions lie at residues 379-380 (KY), 442-447 (RAGNEK), and 556-558 (SAK). The 475-residue stretch at 386 to 860 (TSNFKTNSDR…KKVKKEEEEN (475 aa)) folds into the Topo IB-type catalytic domain. Residues 716–737 (EQKGLTGDDGTPKKGKKAKNVE) form a disordered region. Tyr-822 (O-(3'-phospho-DNA)-tyrosine intermediate) is an active-site residue. 2 disordered regions span residues 843–890 (GQGK…TGDS) and 940–1019 (MRKL…AAVV). Residues 854 to 863 (KKEEEENDIK) show a composition bias toward basic and acidic residues. The segment covering 864–879 (PKKKDAKGAASKKRAA) has biased composition (basic residues). Composition is skewed to basic and acidic residues over residues 940-950 (MRKLDSAERKG) and 980-996 (TSAD…VDKT). Residues 997–1012 (EESDDDLSSDSSDDED) are compositionally biased toward acidic residues.

It belongs to the type IB topoisomerase family. In terms of assembly, monomer.

It catalyses the reaction ATP-independent breakage of single-stranded DNA, followed by passage and rejoining.. Its function is as follows. Releases the supercoiling and torsional tension of DNA introduced during the DNA replication and transcription by transiently cleaving and rejoining one strand of the DNA duplex. Introduces a single-strand break via transesterification at a target site in duplex DNA. The scissile phosphodiester is attacked by the catalytic tyrosine of the enzyme, resulting in the formation of a DNA-(3'-phosphotyrosyl)-enzyme intermediate and the expulsion of a 5'-OH DNA strand. The free DNA strand then rotates around the intact phosphodiester bond on the opposing strand, thus removing DNA supercoils. Finally, in the religation step, the DNA 5'-OH attacks the covalent intermediate to expel the active-site tyrosine and restore the DNA phosphodiester backbone. The protein is DNA topoisomerase 1 (TOP1) of Mycosarcoma maydis (Corn smut fungus).